A 268-amino-acid chain; its full sequence is 4-hydroxy-tetrahydrodipicolinate reductase (268 aa).

NAD(+) contacts are provided by residues 8–13 and glutamate 34; that span reads GAAGRM. Residue arginine 35 coordinates NADP(+). Residues 96 to 98 and 120 to 123 each bind NAD(+); these read GST and SPNM. Histidine 153 acts as the Proton donor/acceptor in catalysis. (S)-2,3,4,5-tetrahydrodipicolinate is bound at residue histidine 154. The active-site Proton donor is the lysine 157. 163 to 164 contributes to the (S)-2,3,4,5-tetrahydrodipicolinate binding site; it reads GT.

Belongs to the DapB family.

The protein resides in the cytoplasm. It catalyses the reaction (S)-2,3,4,5-tetrahydrodipicolinate + NAD(+) + H2O = (2S,4S)-4-hydroxy-2,3,4,5-tetrahydrodipicolinate + NADH + H(+). The catalysed reaction is (S)-2,3,4,5-tetrahydrodipicolinate + NADP(+) + H2O = (2S,4S)-4-hydroxy-2,3,4,5-tetrahydrodipicolinate + NADPH + H(+). Its pathway is amino-acid biosynthesis; L-lysine biosynthesis via DAP pathway; (S)-tetrahydrodipicolinate from L-aspartate: step 4/4. In terms of biological role, catalyzes the conversion of 4-hydroxy-tetrahydrodipicolinate (HTPA) to tetrahydrodipicolinate. This Anaeromyxobacter sp. (strain Fw109-5) protein is 4-hydroxy-tetrahydrodipicolinate reductase.